Consider the following 174-residue polypeptide: Gamma-crystallin C (174 aa).

2 Beta/gamma crystallin 'Greek key' domains span residues 2 to 40 and 41 to 83; these read GKITFYEDRGFQGRCYQCSSDCPNLQPYFSRCNSIRVDS and GCWM…CLIS. Residue C23 is modified to S-methylcysteine. Positions 84–87 are connecting peptide; sequence DTSS. 2 consecutive Beta/gamma crystallin 'Greek key' domains span residues 88-128 and 129-171; these read HRLR…HVLE and GCWV…RRVV.

This sequence belongs to the beta/gamma-crystallin family.

Its function is as follows. Crystallins are the dominant structural components of the vertebrate eye lens. The sequence is that of Gamma-crystallin C (CRYGC) from Bos taurus (Bovine).